The chain runs to 276 residues: MTASGGGSTAATGRMPTWKERENNKKRERRRRAIAAKIFTGLRSQGNYKLPKHCDNNEVLKALCLEAGWIVHEDGTTYRKGSRPTETTVPCSSIQLSPQSSAFQSPIPSYQASPSSSSYPSPTRFDPNQSSTYLIPYLQNLASSGNLAPLRISNSAPVTPPISSPRRSNPRLPRWQSSNFPVSAPSSPTRRLHHYTSIPECDESDVSTVDSCRWGNFQSVNVSQTCPPSPTFNLVGKSVSSVGVDVSVKPWEGEKIHDVGIDDLELTLGHNTKGRG.

Disordered regions lie at residues 1–30 (MTAS…RERR), 76–125 (TTYR…PTRF), and 155–191 (SAPV…PTRR). Residues 14 to 87 (RMPTWKEREN…YRKGSRPTET (74 aa)) form a required for DNA-binding region. Over residues 84 to 103 (PTETTVPCSSIQLSPQSSAF) the composition is skewed to polar residues. The span at 104 to 122 (QSPIPSYQASPSSSSYPSP) shows a compositional bias: low complexity. Phosphothreonine is present on threonine 159. The segment covering 164-174 (SPRRSNPRLPR) has biased composition (low complexity). Over residues 175-189 (WQSSNFPVSAPSSPT) the composition is skewed to polar residues.

This sequence belongs to the BZR/LAT61 family. Phosphorylated. Phosphorylation increases protein degradation.

In Arabidopsis thaliana (Mouse-ear cress), this protein is BES1/BZR1 homolog protein 1 (BEH1).